The primary structure comprises 351 residues: MFYLLGLRLLKYITFRMAYATIFAFLLSLIVGPHIILRLKKLRADQILREDGPKRHLSEKTGIPTMGGILIFFCVFISLVFWSNILNVYFLIIVFVMFGFAFLGFIDDFLKIKKKTSDGLKARFKVYGQIIFSFISVSILYYLGGEHVSIIYFPFIKSFKMDLGVFYIPFGMFILIAASNSFNLTDGLDGLAIGLSIVITGALIIIAYITSRADFAAYLHIPNIKGSEELVIFLGALLGGSFGFLWFNAYPAKIMMGDTGSLALGAILGMTALILKSEILFSILAGVFIIETMSVIIQVIVYKKTKKRVFKMAPLHHHFEELGWSEMQVVIRFWIIGLIFAIIALSTIKIR.

The next 10 membrane-spanning stretches (helical) occupy residues methionine 17 to leucine 37, glycine 62 to tryptophan 82, isoleucine 85 to phenylalanine 105, isoleucine 130 to isoleucine 150, leucine 163 to asparagine 183, glycine 190 to threonine 210, leucine 230 to tyrosine 250, isoleucine 254 to isoleucine 274, phenylalanine 281 to valine 301, and glutamine 328 to isoleucine 348.

It belongs to the glycosyltransferase 4 family. MraY subfamily. Mg(2+) is required as a cofactor.

The protein resides in the cell inner membrane. It carries out the reaction UDP-N-acetyl-alpha-D-muramoyl-L-alanyl-gamma-D-glutamyl-meso-2,6-diaminopimeloyl-D-alanyl-D-alanine + di-trans,octa-cis-undecaprenyl phosphate = di-trans,octa-cis-undecaprenyl diphospho-N-acetyl-alpha-D-muramoyl-L-alanyl-D-glutamyl-meso-2,6-diaminopimeloyl-D-alanyl-D-alanine + UMP. It functions in the pathway cell wall biogenesis; peptidoglycan biosynthesis. In terms of biological role, catalyzes the initial step of the lipid cycle reactions in the biosynthesis of the cell wall peptidoglycan: transfers peptidoglycan precursor phospho-MurNAc-pentapeptide from UDP-MurNAc-pentapeptide onto the lipid carrier undecaprenyl phosphate, yielding undecaprenyl-pyrophosphoryl-MurNAc-pentapeptide, known as lipid I. The sequence is that of Phospho-N-acetylmuramoyl-pentapeptide-transferase from Borreliella afzelii (strain PKo) (Borrelia afzelii).